A 293-amino-acid polypeptide reads, in one-letter code: 4-hydroxy-tetrahydrodipicolinate synthase (293 aa).

Thr-45 is a binding site for pyruvate. Residue Tyr-133 is the Proton donor/acceptor of the active site. Lys-162 (schiff-base intermediate with substrate) is an active-site residue. Ile-204 is a pyruvate binding site.

Belongs to the DapA family. Homotetramer; dimer of dimers.

Its subcellular location is the cytoplasm. The catalysed reaction is L-aspartate 4-semialdehyde + pyruvate = (2S,4S)-4-hydroxy-2,3,4,5-tetrahydrodipicolinate + H2O + H(+). The protein operates within amino-acid biosynthesis; L-lysine biosynthesis via DAP pathway; (S)-tetrahydrodipicolinate from L-aspartate: step 3/4. Its function is as follows. Catalyzes the condensation of (S)-aspartate-beta-semialdehyde [(S)-ASA] and pyruvate to 4-hydroxy-tetrahydrodipicolinate (HTPA). This is 4-hydroxy-tetrahydrodipicolinate synthase from Brucella abortus biovar 1 (strain 9-941).